A 233-amino-acid chain; its full sequence is Purine nucleoside phosphorylase DeoD-type (233 aa).

Position 4 (His4) interacts with a purine D-ribonucleoside. Phosphate-binding positions include Gly20, Arg24, Arg43, and 87–90 (RIGT). A purine D-ribonucleoside-binding positions include 179-181 (EME) and 203-204 (SD). Residue Asp204 is the Proton donor of the active site.

The protein belongs to the PNP/UDP phosphorylase family. In terms of assembly, homohexamer; trimer of homodimers.

It catalyses the reaction a purine D-ribonucleoside + phosphate = a purine nucleobase + alpha-D-ribose 1-phosphate. The enzyme catalyses a purine 2'-deoxy-D-ribonucleoside + phosphate = a purine nucleobase + 2-deoxy-alpha-D-ribose 1-phosphate. Its function is as follows. Catalyzes the reversible phosphorolytic breakdown of the N-glycosidic bond in the beta-(deoxy)ribonucleoside molecules, with the formation of the corresponding free purine bases and pentose-1-phosphate. The sequence is that of Purine nucleoside phosphorylase DeoD-type from Helicobacter acinonychis (strain Sheeba).